A 224-amino-acid polypeptide reads, in one-letter code: Ankyrin repeat domain-containing protein 45 (224 aa).

2 ANK repeats span residues 46 to 76 (VGRNALFAACMMGRSAIVRELVQNGAADVNE) and 80 to 109 (RGYSPLHCSAMWGQLDTLKTLVELNADFQA).

In terms of tissue distribution, widely expressed.

It localises to the cytoplasm. Its subcellular location is the midbody. It is found in the midbody ring. The protein resides in the cleavage furrow. Its function is as follows. May play a role during cell division. The chain is Ankyrin repeat domain-containing protein 45 from Danio rerio (Zebrafish).